Consider the following 43-residue polypeptide: Protein PsbN (43 aa).

A helical membrane pass occupies residues 5 to 27; that stretch reads TLVAISISCLLVSFTGYALYTAF.

The protein belongs to the PsbN family.

It localises to the plastid. The protein localises to the chloroplast thylakoid membrane. Functionally, may play a role in photosystem I and II biogenesis. The sequence is that of Protein PsbN from Cryptomeria japonica (Japanese cedar).